The chain runs to 329 residues: Small ribosomal subunit protein uS2 (329 aa).

Belongs to the universal ribosomal protein uS2 family.

The sequence is that of Small ribosomal subunit protein uS2 from Bradyrhizobium sp. (strain ORS 278).